We begin with the raw amino-acid sequence, 404 residues long: Ubiquitin-like modifier-activating enzyme 5 (404 aa).

Residue S45 is modified to Phosphoserine. Positions 83, 104, 127, 150, and 184 each coordinate ATP. Zn(2+) is bound by residues C226 and C229. The active-site Glycyl thioester intermediate is the C250. Zn(2+) is bound by residues C303 and C308. The UFM1-interacting sequence (UIS) motif lies at 334 to 346 (IIHEDNEWGIELV). The segment at 347–377 (SEISEEELKKSSGPIPDLPEGIIVAYTVPQK) is linker. Residues S358 and S393 each carry the phosphoserine modification. Positions 389 to 404 (DSGESLEDLMAKMKNI) match the UFC1-binding sequence (UFC) motif.

This sequence belongs to the ubiquitin-activating E1 family. UBA5 subfamily. In terms of assembly, homodimer; homodimerization is required for UFM1 activation. Interacts (via UIS motif) with UFM1; binds UFM1 via a trans-binding mechanism in which UFM1 interacts with distinct sites in both subunits of the UBA5 homodimer. Interacts (via C-terminus) with UFC1. Interacts (via UIS motif) with GABARAPL2 and, with lower affinity, with GABARAP and GABARAPL1.

The protein resides in the cytoplasm. It is found in the nucleus. It localises to the endoplasmic reticulum membrane. The protein localises to the golgi apparatus. E1-like enzyme which specifically catalyzes the first step in ufmylation. Activates UFM1 by first adenylating its C-terminal glycine residue with ATP, and thereafter linking this residue to the side chain of a cysteine residue in E1, yielding a UFM1-E1 thioester and free AMP. Activates UFM1 via a trans-binding mechanism, in which UFM1 interacts with distinct sites in both subunits of the UBA5 homodimer. Trans-binding also promotes stabilization of the UBA5 homodimer, and enhances ATP-binding. Transfer of UFM1 from UBA5 to the E2-like enzyme UFC1 also takes place using a trans mechanism. Ufmylation plays a key role in various processes, such as ribosome recycling, response to DNA damage, interferon response or reticulophagy (also called ER-phagy). Ufmylation is essential for erythroid differentiation of both megakaryocytes and erythrocytes. This Bos taurus (Bovine) protein is Ubiquitin-like modifier-activating enzyme 5.